A 20-amino-acid chain; its full sequence is Unknown protein NF040 from 2D-PAGE (20 aa).

The TCTP domain maps to methionine 1 to methionine 20.

Belongs to the TCTP family.

The chain is Unknown protein NF040 from 2D-PAGE from Naegleria fowleri (Brain eating amoeba).